The following is a 470-amino-acid chain: FAD-dependent monooxygenase nvfK (470 aa).

Positions 1-23 (MEKAKFKVVIVGGSITGLTLAHC) are cleaved as a signal peptide. FAD is bound by residues Glu-35, Gly-49, and Arg-108. N-linked (GlcNAc...) asparagine glycosylation is present at Asn-121. The active site involves Tyr-216. Positions 308 and 321 each coordinate FAD. Residues 450-470 (ILMSIVLVAPAWVYIFSSLVW) form a helical membrane-spanning segment.

The protein belongs to the paxM FAD-dependent monooxygenase family. Requires FAD as cofactor.

The protein resides in the membrane. The catalysed reaction is (3R)-3-farnesyl-6-hydroxy-2,3,5-trimethyl-4-oxocyclohexa-1,5-diene-1-carboxylate + 2-oxoglutarate + O2 = (3R)-[(10S)-11-epoxyfarnesyl]-2,3,5-trimethyl-6-oxido-4-oxocyclohexa-1,5-diene-1-carboxylate + succinate + CO2. The protein operates within secondary metabolite biosynthesis; terpenoid biosynthesis. Functionally, FAD-dependent monooxygenase; part of the gene cluster that mediates the biosynthesis of novofumigatonin, a heavily oxygenated meroterpenoid containing a unique orthoester moiety. The first step of the pathway is the synthesis of 3,5-dimethylorsellinic acid (DMOA) by the polyketide synthase nvfA via condensation of one acetyl-CoA starter unit with 3 malonyl-CoA units and 2 methylations. DMOA is then converted to farnesyl-DMOA by the farnesyltransferase nvfB. Epoxydation by FAD-dependent monooxygenase nvfK, followed by a protonation-initiated cyclization catalyzed by the terpene cyclase nvfL leads to the production of asnavolin H. The short chain dehydrogenase nvfC then as a 3-OH dehydrogenase of asnovolin H to yield chemesin D. There are two branches to synthesize asnovolin A from chemesin D. In one branch, chemesin D undergoes Baeyer-Villiger oxidation by nvfH, methylation by nvfJ, and enoyl reduction by the nvfM D enoylreductase that reduces the double bond between C-5'and C-6', to form respectively asnovolin I, asnovolin K, and asnovolin A. In the other branch, the methylation precedes the Baeyer-Villiger oxidation and the enoyl reduction to yield asnovolin A via the asnovolin J intermediate. Asnovolin A is further converted to fumigatonoid A by the Fe(II)/2-oxoglutarate-dependent dioxygenase nvfI that catalyzes an endoperoxidation reaction. The alpha/beta hydrolase nvfD then acts as an epimerase that converts fumigatonoid A to its C-5' epimer, which then undergoes spontaneous or nvfD-catalyzed lactonization. The following step utilizes the ketoreductase nvfG to produce fumigatonoid B. The dioxygenase nvfE further converts fumigatonoid B into fumigatonoid C. Finally the Fe(II)/2-oxoglutarate-dependent dioxygenase nvfF catalyzes two rounds of oxidation to transform fumigatonoid C into the end product, novofumigatonin A. The sequence is that of FAD-dependent monooxygenase nvfK from Aspergillus novofumigatus (strain IBT 16806).